The chain runs to 154 residues: Myoglobin (154 aa).

The region spanning 2 to 148 is the Globin domain; sequence GLSDGEWQLV…FRKDMASNYK (147 aa). Phosphoserine is present on Ser4. Nitrite is bound at residue His65. Residue His65 coordinates O2. Thr68 bears the Phosphothreonine mark. Heme b is bound at residue His94.

The protein belongs to the globin family. As to quaternary structure, monomeric.

The protein localises to the cytoplasm. The protein resides in the sarcoplasm. It carries out the reaction Fe(III)-heme b-[protein] + nitric oxide + H2O = Fe(II)-heme b-[protein] + nitrite + 2 H(+). The catalysed reaction is H2O2 + AH2 = A + 2 H2O. Functionally, monomeric heme protein which primary function is to store oxygen and facilitate its diffusion within muscle tissues. Reversibly binds oxygen through a pentacoordinated heme iron and enables its timely and efficient release as needed during periods of heightened demand. Depending on the oxidative conditions of tissues and cells, and in addition to its ability to bind oxygen, it also has a nitrite reductase activity whereby it regulates the production of bioactive nitric oxide. Under stress conditions, like hypoxia and anoxia, it also protects cells against reactive oxygen species thanks to its pseudoperoxidase activity. The polypeptide is Myoglobin (Homo sapiens (Human)).